The following is a 115-amino-acid chain: Probable non-functional immunoglobulin heavy variable 3-38-3 (115 aa).

A signal peptide spans 1–19; the sequence is MQFVLSWVFLVAILKGVQC. Residues 20–44 are framework-1; the sequence is EVQLVESRGVLVQPGGSLRLSCAAS. In terms of domain architecture, Ig-like spans 31–115; sequence VQPGGSLRLS…EDTAVYYCKK (85 aa). Cys41 and Cys113 are disulfide-bonded. Positions 45 to 52 are complementarity-determining-1; that stretch reads GFTVSSNE. A framework-2 region spans residues 53-69; that stretch reads MSWVRQAPGKGLEWVSS. Positions 70–75 are complementarity-determining-2; it reads ISGGST. Residues 76–113 form a framework-3 region; the sequence is YYADSRKGRFTISRDNSKNTLHLQMNSLRAEDTAVYYC. The complementarity-determining-3 stretch occupies residues 114–115; it reads KK.

In terms of assembly, immunoglobulins are composed of two identical heavy chains and two identical light chains; disulfide-linked.

It localises to the secreted. The protein localises to the cell membrane. Functionally, probable non-functional open reading frame (ORF) of V region of the variable domain of immunoglobulin heavy chains. Non-functional ORF generally cannot participate in the synthesis of a productive immunoglobulin chain due to altered V-(D)-J or switch recombination and/or splicing site (at mRNA level) and/or conserved amino acid change (protein level). Immunoglobulins, also known as antibodies, are membrane-bound or secreted glycoproteins produced by B lymphocytes. In the recognition phase of humoral immunity, the membrane-bound immunoglobulins serve as receptors which, upon binding of a specific antigen, trigger the clonal expansion and differentiation of B lymphocytes into immunoglobulins-secreting plasma cells. Secreted immunoglobulins mediate the effector phase of humoral immunity, which results in the elimination of bound antigens. The antigen binding site is formed by the variable domain of one heavy chain, together with that of its associated light chain. Thus, each immunoglobulin has two antigen binding sites with remarkable affinity for a particular antigen. The variable domains are assembled by a process called V-(D)-J rearrangement and can then be subjected to somatic hypermutations which, after exposure to antigen and selection, allow affinity maturation for a particular antigen. This chain is Probable non-functional immunoglobulin heavy variable 3-38-3, found in Homo sapiens (Human).